We begin with the raw amino-acid sequence, 24 residues long: Brevinin-1SY (24 aa).

A disulfide bridge links Cys18 with Cys24.

In terms of tissue distribution, expressed by the skin glands.

It is found in the secreted. Functionally, antibacterial activity against Gram-positive bacterium S.aureus and Gram-negative bacterium E.coli. The polypeptide is Brevinin-1SY (Lithobates sylvaticus (Wood frog)).